Consider the following 142-residue polypeptide: Alpha-lactalbumin (142 aa).

Positions 1–18 are cleaved as a signal peptide; it reads MMSFVSLLLVGILFHATQ. Residues 20–142 form the C-type lysozyme domain; sequence EQLTKCEVFR…KLDQWLCEKL (123 aa). 4 disulfides stabilise this stretch: C25–C139, C47–C130, C80–C96, and C92–C110. N-linked (GlcNAc...) asparagine glycans are attached at residues N64 and N93. The Ca(2+) site is built by K98, D101, D103, D106, and D107.

The protein belongs to the glycosyl hydrolase 22 family. In terms of assembly, lactose synthase (LS) is a heterodimer of a catalytic component, beta1,4-galactosyltransferase (beta4Gal-T1) and a regulatory component, alpha-lactalbumin (LA). As to expression, mammary gland specific. Secreted in milk.

The protein resides in the secreted. Regulatory subunit of lactose synthase, changes the substrate specificity of galactosyltransferase in the mammary gland making glucose a good acceptor substrate for this enzyme. This enables LS to synthesize lactose, the major carbohydrate component of milk. In other tissues, galactosyltransferase transfers galactose onto the N-acetylglucosamine of the oligosaccharide chains in glycoproteins. The sequence is that of Alpha-lactalbumin (LALBA) from Bubalus bubalis (Domestic water buffalo).